The sequence spans 221 residues: CASP-like protein 2U10 (221 aa).

The segment at 1–22 is disordered; that stretch reads MDSSSKPMNGSAGGSPVGDERK. At 1–31 the chain is on the cytoplasmic side; the sequence is MDSSSKPMNGSAGGSPVGDERKMGDHEHEFR. Residues 32-52 traverse the membrane as a helical segment; that stretch reads ISIILLRSFLLVLVIISEALM. At 53–91 the chain is on the extracellular side; that stretch reads VTDRETGSVPLPFFGLPRPVFVTKTAKYELVTGLKFYVD. The chain crosses the membrane as a helical span at residues 92 to 112; it reads ALGVVIGYTVLHLLFNIGLVA. Residues 113 to 122 lie on the Cytoplasmic side of the membrane; it reads TKGTVVDCKS. Residues 123 to 143 traverse the membrane as a helical segment; the sequence is VAWISFIADSMMGYLLLSSAA. The Extracellular segment spans residues 144 to 174; that stretch reads VATEIGYLAEEGAPAVLWRKVCNAFGYFCTV. Residues 175–195 traverse the membrane as a helical segment; the sequence is YAISVVICFIAALVSFVVVGI. The Cytoplasmic portion of the chain corresponds to 196-221; sequence SAYHLFRLYGIQQQAAREKEKLSAEM.

The protein belongs to the Casparian strip membrane proteins (CASP) family. Homodimer and heterodimers.

The protein localises to the cell membrane. This is CASP-like protein 2U10 from Selaginella moellendorffii (Spikemoss).